Here is a 124-residue protein sequence, read N- to C-terminus: Nucleoid-associated protein Noca_0318 (124 aa).

It belongs to the YbaB/EbfC family. As to quaternary structure, homodimer.

It localises to the cytoplasm. Its subcellular location is the nucleoid. In terms of biological role, binds to DNA and alters its conformation. May be involved in regulation of gene expression, nucleoid organization and DNA protection. In Nocardioides sp. (strain ATCC BAA-499 / JS614), this protein is Nucleoid-associated protein Noca_0318.